Reading from the N-terminus, the 463-residue chain is D(5)-like dopamine receptor (463 aa).

Residues 1–39 are Extracellular-facing; sequence MENFYNETEPTEPRGGVDPLRVVTAAEDVPAPVGGVSVR. N6 carries an N-linked (GlcNAc...) asparagine glycan. A helical membrane pass occupies residues 40-65; it reads ALTGCVLCALIVSTLLGNTLVCAAVI. Over 66 to 76 the chain is Cytoplasmic; the sequence is KFRHLRSKVTN. The helical transmembrane segment at 77–103 threads the bilayer; the sequence is AFVVSLAVSDLFVAVLVMPWRAVSEVA. Residues 104-112 are Extracellular-facing; sequence GVWLFGRFC. C112 and C194 are joined by a disulfide. The chain crosses the membrane as a helical span at residues 113 to 135; it reads DTWVAFDIMCSTASILNLCVISM. The Cytoplasmic portion of the chain corresponds to 136–154; the sequence is DRYWAISNPFRYERRMTRR. Residues 155–180 traverse the membrane as a helical segment; that stretch reads FAFLMIAVAWTLSVLISFIPVQLNWH. Over 181–198 the chain is Extracellular; sequence RADNNSSAHEQGDCNASL. Residues 199-223 form a helical membrane-spanning segment; the sequence is NRTYAISSSLISFYIPVLIMVGTYT. The Cytoplasmic segment spans residues 224–273; that stretch reads RIFRIAQTQIRRISSLERAAGQRAQNQSHRASTHDESALKTSFKRETKVL. A helical membrane pass occupies residues 274–301; it reads KTLSVIMGVFVFCWLPFFVLNCVVPFCD. The Extracellular portion of the chain corresponds to 302–315; the sequence is VDKVGEPPCVSDTT. Residues 316–337 form a helical membrane-spanning segment; it reads FNIFVWFGWANSSLNPVIYAFN. At 338 to 463 the chain is on the cytoplasmic side; it reads ADFRKAFTTI…PGQIQDLGDL (126 aa).

It belongs to the G-protein coupled receptor 1 family.

It is found in the cell membrane. Receptor for dopamine. The polypeptide is D(5)-like dopamine receptor (dl) (Takifugu rubripes (Japanese pufferfish)).